Consider the following 504-residue polypeptide: Pentatricopeptide repeat-containing protein At5g16640, mitochondrial (504 aa).

The transit peptide at 1 to 43 (MRRSISSKAKSFLHRNLLYSGNSGTSPSSSFSICGFCFSRRAY) directs the protein to the mitochondrion. PPR repeat units lie at residues 45 to 79 (NGSD…RPLP), 80 to 114 (SIAD…GIPH), 115 to 149 (NLCT…GHEP), 150 to 184 (SIVT…GYKP), 185 to 219 (NVVI…GIGP), 220 to 254 (DVVT…EIYP), 255 to 289 (DVFT…SLDP), 290 to 324 (DIVT…GCFP), 325 to 359 (DVVT…GVVR), 360 to 394 (NTVT…GVHP), 395 to 429 (NIIT…GMDA), 430 to 464 (DIVT…GLMP), and 465 to 499 (DIWT…GILP).

This sequence belongs to the PPR family. P subfamily.

The protein localises to the mitochondrion. The sequence is that of Pentatricopeptide repeat-containing protein At5g16640, mitochondrial from Arabidopsis thaliana (Mouse-ear cress).